We begin with the raw amino-acid sequence, 892 residues long: Alanine--tRNA ligase (892 aa).

Residues His-596, His-600, Cys-700, and His-704 each coordinate Zn(2+).

The protein belongs to the class-II aminoacyl-tRNA synthetase family. Zn(2+) is required as a cofactor.

It localises to the cytoplasm. The enzyme catalyses tRNA(Ala) + L-alanine + ATP = L-alanyl-tRNA(Ala) + AMP + diphosphate. Its function is as follows. Catalyzes the attachment of alanine to tRNA(Ala) in a two-step reaction: alanine is first activated by ATP to form Ala-AMP and then transferred to the acceptor end of tRNA(Ala). Also edits incorrectly charged Ser-tRNA(Ala) and Gly-tRNA(Ala) via its editing domain. The sequence is that of Alanine--tRNA ligase from Methanococcus maripaludis (strain DSM 14266 / JCM 13030 / NBRC 101832 / S2 / LL).